A 215-amino-acid polypeptide reads, in one-letter code: Cytochrome c biogenesis ATP-binding export protein CcmA (215 aa).

Positions 3–215 (LEAENLAGER…MAAFSVEDIA (213 aa)) constitute an ABC transporter domain. 35–42 (GPNGSGKS) is an ATP binding site.

Belongs to the ABC transporter superfamily. CcmA exporter (TC 3.A.1.107) family. The complex is composed of two ATP-binding proteins (CcmA) and two transmembrane proteins (CcmB).

The protein resides in the cell inner membrane. It catalyses the reaction heme b(in) + ATP + H2O = heme b(out) + ADP + phosphate + H(+). Functionally, part of the ABC transporter complex CcmAB involved in the biogenesis of c-type cytochromes; once thought to export heme, this seems not to be the case, but its exact role is uncertain. Responsible for energy coupling to the transport system. The protein is Cytochrome c biogenesis ATP-binding export protein CcmA of Brucella melitensis biotype 1 (strain ATCC 23456 / CCUG 17765 / NCTC 10094 / 16M).